A 239-amino-acid chain; its full sequence is Ribosomal RNA small subunit methyltransferase G (239 aa).

S-adenosyl-L-methionine contacts are provided by residues Gly-77, Phe-82, Ala-128–Glu-129, and Arg-147. A disordered region spans residues Ile-215–Gly-239. Positions Arg-216–Arg-227 are enriched in basic residues.

The protein belongs to the methyltransferase superfamily. RNA methyltransferase RsmG family.

It localises to the cytoplasm. Functionally, specifically methylates the N7 position of guanine in position 535 of 16S rRNA. This Bacillus velezensis (strain DSM 23117 / BGSC 10A6 / LMG 26770 / FZB42) (Bacillus amyloliquefaciens subsp. plantarum) protein is Ribosomal RNA small subunit methyltransferase G.